The sequence spans 534 residues: Lariat debranching enzyme A (534 aa).

A divalent metal cation-binding residues include Cys8, His10, Asp39, and Asn84. Residues 124–154 form a lariat recognition loop region; that stretch reads SGIFKSHDYRKGHFERPPYSKDTVRSAYHVR. A divalent metal cation-binding residues include His174, His226, and His228. Disordered stretches follow at residues 386 to 439 and 469 to 534; these read EEEK…QEDE and SMAV…DEDE. Residues 388–400 are compositionally biased toward acidic residues; the sequence is EKEDFDMTEDNEA. Over residues 413–424 the composition is skewed to polar residues; sequence STDTSILSTSVN. The span at 428–439 shows a compositional bias: acidic residues; sequence ITLEDDDEQEDE. Over residues 484 to 499 the composition is skewed to basic and acidic residues; that stretch reads ELDRSESSQTEGEGKQ.

This sequence belongs to the lariat debranching enzyme family. Fe(2+) serves as cofactor. It depends on Zn(2+) as a cofactor. Requires Mn(2+) as cofactor.

Its subcellular location is the nucleus. Its activity is regulated as follows. Active in presence of diverse metals including Fe(2+), Zn(2+), Mn(2+). Also activated by Ca(2+). Binds two metal cations in two adjacent alpha and beta metal-binding pockets. Its function is as follows. Cleaves the 2'-5' phosphodiester linkage at the branch point of excised lariat intron RNA and converts them into linear molecules that can be subsequently degraded, thereby facilitating ribonucleotide turnover. Linked to its role in pre-mRNA processing mechanism, may also participate in retrovirus replication and have an antiviral cell-intrinsic defense function. The polypeptide is Lariat debranching enzyme A (dbr1-a) (Xenopus laevis (African clawed frog)).